We begin with the raw amino-acid sequence, 868 residues long: DNA mismatch repair protein MutS (868 aa).

621 to 628 is an ATP binding site; the sequence is GPNMGGKS. A disordered region spans residues 803-852; that stretch reads LESGDGGDTGSAQLPLFGPEPVFPPPAQPEPEPDPIREAVENLDPDGLTP. The span at 823-832 shows a compositional bias: pro residues; it reads PVFPPPAQPE.

This sequence belongs to the DNA mismatch repair MutS family.

In terms of biological role, this protein is involved in the repair of mismatches in DNA. It is possible that it carries out the mismatch recognition step. This protein has a weak ATPase activity. This Halorhodospira halophila (strain DSM 244 / SL1) (Ectothiorhodospira halophila (strain DSM 244 / SL1)) protein is DNA mismatch repair protein MutS.